Here is a 120-residue protein sequence, read N- to C-terminus: Host cell factor C1 regulator 1 (120 aa).

The tract at residues 1 to 30 (MILQQPLERGPPSRDPRATTGVTRGLNASL) is disordered. A compositionally biased stretch (polar residues) spans 20-30 (TGVTRGLNASL). Residues 58 to 61 (DHPY) form an interaction with HCFC1 region. The Nuclear export signal signature appears at 92 to 101 (IPEALRLLRL).

Interacts with HCFC1.

Its subcellular location is the cytoplasm. The protein localises to the nucleus. In terms of biological role, regulates HCFC1 activity by modulating its subcellular localization. Overexpression of HCFC1R1 leads to accumulation of HCFC1 in the cytoplasm. HCFC1R1-mediated export may provide the pool of cytoplasmic HCFC1 required for import of virion-derived VP16 into the nucleus. The sequence is that of Host cell factor C1 regulator 1 (Hcfc1r1) from Mus musculus (Mouse).